The sequence spans 732 residues: Coagulation factor XIII A chain (732 aa).

The interval 1–27 (MSETSRTAFGGRRAVPPNNSNAAEDDL) is disordered. N-acetylserine is present on Ser2. Positions 2–38 (SETSRTAFGGRRAVPPNNSNAAEDDLPTVELQGVVPR) are cleaved as a propeptide — activation peptide. Residues Cys315, His374, and Asp397 contribute to the active site. Ca(2+) is bound by residues Asn437, Asp439, Glu486, and Glu491. Asn614 carries N-linked (GlcNAc...) asparagine glycosylation.

Belongs to the transglutaminase superfamily. Transglutaminase family. As to quaternary structure, tetramer of two A chains (F13A1) and two B (F13B) chains. Requires Ca(2+) as cofactor. In terms of processing, the activation peptide is released by thrombin.

It localises to the cytoplasm. It is found in the secreted. The catalysed reaction is L-glutaminyl-[protein] + L-lysyl-[protein] = [protein]-L-lysyl-N(6)-5-L-glutamyl-[protein] + NH4(+). In terms of biological role, factor XIII is activated by thrombin and calcium ion to a transglutaminase that catalyzes the formation of gamma-glutamyl-epsilon-lysine cross-links between fibrin chains, thus stabilizing the fibrin clot. Also cross-link alpha-2-plasmin inhibitor, or fibronectin, to the alpha chains of fibrin. The chain is Coagulation factor XIII A chain (F13A1) from Homo sapiens (Human).